The primary structure comprises 805 residues: MRHGRGSAVSAAISGLSPAKNSPFPQLCNVLLVASLSKTLSQSGTRSLDANSIPISEPVVLQILRRNSIDPSKKLDFFRWCYSLRPGYKHSATAYSQIFRTVCRTGLLGEVPDLLGSMKEDGVNLDQTMAKILLDSLIRSGKFESALGVLDYMEELGDCLNPSVYDSVLIALVKKHELRLALSILFKLLEASDNHSDDDTGRVIIVSYLPGTVAVNELLVGLRRADMRSEFKRVFEKLKGMKRFKFDTWSYNICIHGFGCWGDLDAALSLFKEMKERSSVYGSSFGPDICTYNSLIHVLCLFGKAKDALIVWDELKVSGHEPDNSTYRILIQGCCKSYRMDDAMRIYGEMQYNGFVPDTIVYNCLLDGTLKARKVTEACQLFEKMVQEGVRASCWTYNILIDGLFRNGRAEAGFTLFCDLKKKGQFVDAITFSIVGLQLCREGKLEGAVKLVEEMETRGFSVDLVTISSLLIGFHKQGRWDWKEKLMKHIREGNLVPNVLRWNAGVEASLKRPQSKDKDYTPMFPSKGSFLDIMSMVGSEDDGASAEEVSPMEDDPWSSSPYMDQLAHQRNQPKPLFGLARGQRVEAKPDSFDVDMMNTFLSIYLSKGDLSLACKLFEIFNGMGVTDLTSYTYNSMMSSFVKKGYFQTARGVLDQMFENFCAADIATYNVIIQGLGKMGRADLASAVLDRLTKQGGYLDIVMYNTLINALGKATRLDEATQLFDHMKSNGINPDVVSYNTMIEVNSKAGKLKEAYKYLKAMLDAGCLPNHVTDTILDYLGKEMEKARFKKASFVRNKPNNNNISS.

PPR repeat units follow at residues 91 to 125 (SATAYSQIFRTVCRTGLLGEVPDLLGSMKEDGVNL), 126 to 160 (DQTMAKILLDSLIRSGKFESALGVLDYMEELGDCL), 161 to 196 (NPSVYDSVLIALVKKHELRLALSILFKLLEASDNHS), 211 to 241 (GTVAVNELLVGLRRADMRSEFKRVFEKLKGM), 247 to 277 (DTWSYNICIHGFGCWGDLDAALSLFKEMKER), 288 to 322 (DICTYNSLIHVLCLFGKAKDALIVWDELKVSGHEP), 323 to 357 (DNSTYRILIQGCCKSYRMDDAMRIYGEMQYNGFVP), 358 to 392 (DTIVYNCLLDGTLKARKVTEACQLFEKMVQEGVRA), 393 to 427 (SCWTYNILIDGLFRNGRAEAGFTLFCDLKKKGQFV), 428 to 462 (DAITFSIVGLQLCREGKLEGAVKLVEEMETRGFSV), 463 to 497 (DLVTISSLLIGFHKQGRWDWKEKLMKHIREGNLVP), 593 to 627 (DVDMMNTFLSIYLSKGDLSLACKLFEIFNGMGVTD), 629 to 663 (TSYTYNSMMSSFVKKGYFQTARGVLDQMFENFCAA), 664 to 698 (DIATYNVIIQGLGKMGRADLASAVLDRLTKQGGYL), 699 to 733 (DIVMYNTLINALGKATRLDEATQLFDHMKSNGINP), and 734 to 768 (DVVSYNTMIEVNSKAGKLKEAYKYLKAMLDAGCLP).

Belongs to the PPR family. P subfamily.

This chain is Pentatricopeptide repeat-containing protein At4g01570, found in Arabidopsis thaliana (Mouse-ear cress).